Consider the following 430-residue polypeptide: Adenylosuccinate synthetase (430 aa).

GTP-binding positions include 12–18 (GDEGKGK) and 40–42 (GHT). Residue aspartate 13 is the Proton acceptor of the active site. Mg(2+)-binding residues include aspartate 13 and glycine 40. IMP contacts are provided by residues 13–16 (DEGK), 38–41 (NAGH), threonine 130, arginine 144, glutamine 224, threonine 239, and arginine 303. Residue histidine 41 is the Proton donor of the active site. 299–305 (TNTGRPR) is a substrate binding site. Residues arginine 305, 331–333 (KLD), and 413–415 (STS) contribute to the GTP site.

It belongs to the adenylosuccinate synthetase family. In terms of assembly, homodimer. It depends on Mg(2+) as a cofactor.

The protein localises to the cytoplasm. It carries out the reaction IMP + L-aspartate + GTP = N(6)-(1,2-dicarboxyethyl)-AMP + GDP + phosphate + 2 H(+). It participates in purine metabolism; AMP biosynthesis via de novo pathway; AMP from IMP: step 1/2. Plays an important role in the de novo pathway of purine nucleotide biosynthesis. Catalyzes the first committed step in the biosynthesis of AMP from IMP. The sequence is that of Adenylosuccinate synthetase from Rhodopseudomonas palustris (strain BisB5).